The primary structure comprises 540 residues: Keratin, type II cytoskeletal 73 (540 aa).

The head stretch occupies residues 1-131 (MSRQFTYKSG…DPEIQKVRAQ (131 aa)). The segment at 132–167 (EREQIKVLNNKFASFIDKVRFLEQQNQVLETKWELL) is coil 1A. Positions 132 to 445 (EREQIKVLNN…KLLEGEECRM (314 aa)) constitute an IF rod domain. The linker 1 stretch occupies residues 168–186 (QQLDLNNCKNNLEPILEGY). The coil 1B stretch occupies residues 187 to 278 (ISNLRKQLET…CLYEGETAQI (92 aa)). The linker 12 stretch occupies residues 279-302 (QSHISDTSIILSMDNNRNLDLDSI). Positions 303–441 (IAEVRAQYEE…ATYRKLLEGE (139 aa)) are coil 2. The tract at residues 442-540 (ECRMSGEYTN…LSSPTKKTMR (99 aa)) is tail. The interval 502-540 (SGNCSPRGEARTRLGSASEFRDSQGKTLALSSPTKKTMR) is disordered. The segment covering 526-540 (GKTLALSSPTKKTMR) has biased composition (polar residues).

It belongs to the intermediate filament family. As to quaternary structure, heterotetramer of two type I and two type II keratins. Highly expressed in hair follicles from scalp. In hair, it is specifically present in the inner root sheath (IRS) of the hair follicle. Present in the IRS cuticle, but not in Henle or Huxley layers of the IRS. In the IRS cuticle, it is expressed between the lowermost bulb region of the cuticle and the region where Henle cells undergo abrupt terminal differentiation. Detected up to the uppermost cortex region where cuticle cells terminally differentiate (at protein level).

In terms of biological role, has a role in hair formation. Specific component of keratin intermediate filaments in the inner root sheath (IRS) of the hair follicle. The sequence is that of Keratin, type II cytoskeletal 73 (KRT73) from Homo sapiens (Human).